Reading from the N-terminus, the 108-residue chain is ATP-dependent Clp protease adapter protein ClpS (108 aa).

It belongs to the ClpS family. In terms of assembly, binds to the N-terminal domain of the chaperone ClpA.

Its function is as follows. Involved in the modulation of the specificity of the ClpAP-mediated ATP-dependent protein degradation. The polypeptide is ATP-dependent Clp protease adapter protein ClpS (Mycobacterium leprae (strain TN)).